The chain runs to 266 residues: Type II iodothyronine deiodinase (266 aa).

Over 1–9 (MGLLSVDLL) the chain is Lumenal. Residues 10–34 (ITLQILPVFFSNCLFLALYDSVILL) traverse the membrane as a helical; Signal-anchor for type III membrane protein segment. Topologically, residues 35–266 (KHVALLLSRS…KNFSKRUILD (232 aa)) are cytoplasmic. U130 is an active-site residue. Non-standard amino acids (selenocysteine) are located at U130 and U263.

It belongs to the iodothyronine deiodinase family. Predominantly monomer. Can form homodimers but homodimerization is not essential for enzyme activity. Interacts with USP20 and USP33. Interacts with MARCHF6. In terms of processing, ubiquitinated by MARCHF6, leading to its degradation by the proteasome. Deubiquitinated by USP20 and USP33. As to expression, expressed in cerebral cortex, cerebellum, pituitary gland, mostly in anterior pituitary gland, and pineal gland, as well as in brown adipose tissue (BAT).

It localises to the endoplasmic reticulum membrane. It carries out the reaction 3,3',5-triiodo-L-thyronine + iodide + A + H(+) = L-thyroxine + AH2. It catalyses the reaction 3,3'-diiodo-L-thyronine + iodide + A + H(+) = 3,3',5'-triiodo-L-thyronine + AH2. The enzyme catalyses 3'-iodo-L-thyronine + iodide + A + H(+) = 3',5'-diiodo-L-thyronine + AH2. The catalysed reaction is 3,3'-diiodothyronamine + iodide + A + H(+) = 3,3',5'-triiodothyronamine + AH2. It carries out the reaction 3'-iodothyronamine + iodide + A + H(+) = 3',5'-diiodothyronamine + AH2. Plays a crucial role in the metabolism of thyroid hormones (TH) and has specific roles in TH activation and inactivation by deiodination. Catalyzes the deiodination of L-thyroxine (T4) to 3,5,3'-triiodothyronine (T3) and 3',5'-diiodothyronine (3',5'-T2) to 3'-monoiodothyronine (3'-T1) via outer-ring deiodination (ORD). Catalyzes the deiodination of 3,3',5'-triiodothyronine (rT3) to 3,3'-diiodothyronine (3,3'-T2) via ORD. Catalyzes the phenolic ring deiodinations of 3,3',5'-triiodothyronamine and 3',5'- diiodothyronamine. This Rattus norvegicus (Rat) protein is Type II iodothyronine deiodinase (Dio2).